The chain runs to 227 residues: Translation initiation factor 6 (227 aa).

The protein belongs to the eIF-6 family.

Functionally, binds to the 50S ribosomal subunit and prevents its association with the 30S ribosomal subunit to form the 70S initiation complex. The polypeptide is Translation initiation factor 6 (Methanococcus maripaludis (strain C5 / ATCC BAA-1333)).